A 523-amino-acid chain; its full sequence is Sensory neuron membrane protein 1 (523 aa).

Residues 1-10 (MRLARGIKYA) lie on the Cytoplasmic side of the membrane. A helical membrane pass occupies residues 11–31 (VIGAGVALFGVLFGWVMFPAI). Residues 32-458 (LKSQLKKEMA…NQLFIPKRIV (427 aa)) are Extracellular-facing. 2 N-linked (GlcNAc...) asparagine glycosylation sites follow: Asn67 and Asn229. Intrachain disulfides connect Cys268-Cys333, Cys297-Cys352, and Cys335-Cys341. N-linked (GlcNAc...) asparagine glycosylation occurs at Asn440. The chain crosses the membrane as a helical span at residues 459 to 479 (SVIRWWLLSFGMLAALGGVIF). Residues 480–523 (HFKDDIMRIAIKGDSSVTKVNPEDGEQKDVSVIGQSHEPPKINM) lie on the Cytoplasmic side of the membrane. Positions 499–523 (VNPEDGEQKDVSVIGQSHEPPKINM) are disordered.

This sequence belongs to the CD36 family. As to expression, localizes to both male and female antennae but not the leg, wing, gut, head, or thoracic ganglia. Detected throughout the sensory epithelium, associating with both sex-pheromone sensilla and plant-volatile sensilla. Differentially expressed both among different sensilla and different neurons within a given sensillum. Expression coincides with that of several other olfactory-specific proteins that are involved in odor detection.

It localises to the cell membrane. Plays an olfactory role that is not restricted to pheromone sensitivity. This is Sensory neuron membrane protein 1 from Manduca sexta (Tobacco hawkmoth).